The chain runs to 830 residues: Beta-glucosidase A (830 aa).

The active site involves Asp-769.

It belongs to the glycosyl hydrolase 3 family.

It catalyses the reaction Hydrolysis of terminal, non-reducing beta-D-glucosyl residues with release of beta-D-glucose.. Its function is as follows. B.fibrisolvens beta-glucosidase hydrolyzes cellobiose to a limited extent, cellotriose to cellobiose and glucose, and cellotetraose and cellopentaose to predominantly glucose. The sequence is that of Beta-glucosidase A (bglA) from Butyrivibrio fibrisolvens.